The chain runs to 181 residues: Large ribosomal subunit protein uL5 (181 aa).

Belongs to the universal ribosomal protein uL5 family. In terms of assembly, part of the 50S ribosomal subunit; part of the 5S rRNA/L5/L18/L25 subcomplex. Contacts the 5S rRNA and the P site tRNA. Forms a bridge to the 30S subunit in the 70S ribosome.

Functionally, this is one of the proteins that bind and probably mediate the attachment of the 5S RNA into the large ribosomal subunit, where it forms part of the central protuberance. In the 70S ribosome it contacts protein S13 of the 30S subunit (bridge B1b), connecting the 2 subunits; this bridge is implicated in subunit movement. Contacts the P site tRNA; the 5S rRNA and some of its associated proteins might help stabilize positioning of ribosome-bound tRNAs. This is Large ribosomal subunit protein uL5 from Campylobacter jejuni subsp. jejuni serotype O:6 (strain 81116 / NCTC 11828).